We begin with the raw amino-acid sequence, 429 residues long: Adenylosuccinate synthetase (429 aa).

GTP contacts are provided by residues 13–19 and 41–43; these read GDEGKGK and GHT. The active-site Proton acceptor is aspartate 14. Residues aspartate 14 and glycine 41 each contribute to the Mg(2+) site. Residues 14–17, 39–42, threonine 130, arginine 144, glutamine 224, threonine 239, and arginine 303 contribute to the IMP site; these read DEGK and NAGH. The active-site Proton donor is histidine 42. Residue 299–305 participates in substrate binding; sequence ATTGRAR. GTP is bound by residues arginine 305, 331-333, and 412-414; these read KLD and STG.

It belongs to the adenylosuccinate synthetase family. In terms of assembly, homodimer. Requires Mg(2+) as cofactor.

The protein resides in the cytoplasm. It carries out the reaction IMP + L-aspartate + GTP = N(6)-(1,2-dicarboxyethyl)-AMP + GDP + phosphate + 2 H(+). It participates in purine metabolism; AMP biosynthesis via de novo pathway; AMP from IMP: step 1/2. Its function is as follows. Plays an important role in the de novo pathway of purine nucleotide biosynthesis. Catalyzes the first committed step in the biosynthesis of AMP from IMP. This Psychrobacter arcticus (strain DSM 17307 / VKM B-2377 / 273-4) protein is Adenylosuccinate synthetase.